The primary structure comprises 522 residues: Protein DETOXIFICATION 31 (522 aa).

12 helical membrane-spanning segments follow: residues 89–109 (GAVT…AVSI), 113–133 (VIAG…ETLC), 154–174 (VILS…APIL), 183–203 (ISAM…AYAI), 217–237 (IMVM…FTWL), 249–269 (LALV…VYIF), 299–319 (AAML…AGYL), 324–344 (VSVA…MVAF), 371–391 (VVAV…LLFF), 415–435 (MLAF…VAVG), 441–461 (VVAY…GLLL), and 471–491 (GIWW…TWMI).

The protein belongs to the multi antimicrobial extrusion (MATE) (TC 2.A.66.1) family.

It localises to the membrane. In terms of biological role, positively mediates root hair elongation. This is Protein DETOXIFICATION 31 from Arabidopsis thaliana (Mouse-ear cress).